Consider the following 141-residue polypeptide: Nucleoside triphosphatase NudI (141 aa).

Residues 1–141 form the Nudix hydrolase domain; that stretch reads MRQRTIVCPL…RKTLRLKGLL (141 aa). The short motif at 38-59 is the Nudix box element; it reads GGVEPGERIEEALRREIREELG.

It belongs to the Nudix hydrolase family. NudI subfamily. Monomer. Requires Mg(2+) as cofactor.

It catalyses the reaction a ribonucleoside 5'-triphosphate + H2O = a ribonucleoside 5'-phosphate + diphosphate + H(+). The catalysed reaction is a 2'-deoxyribonucleoside 5'-triphosphate + H2O = a 2'-deoxyribonucleoside 5'-phosphate + diphosphate + H(+). The enzyme catalyses dUTP + H2O = dUMP + diphosphate + H(+). It carries out the reaction dTTP + H2O = dTMP + diphosphate + H(+). It catalyses the reaction dCTP + H2O = dCMP + diphosphate + H(+). Catalyzes the hydrolysis of nucleoside triphosphates, with a preference for pyrimidine deoxynucleoside triphosphates (dUTP, dTTP and dCTP). The polypeptide is Nucleoside triphosphatase NudI (Escherichia coli O9:H4 (strain HS)).